Reading from the N-terminus, the 141-residue chain is Nucleoside triphosphatase NudI (141 aa).

Residues 1-141 form the Nudix hydrolase domain; it reads MRQRTIVCPL…RKTLRLKGLL (141 aa). Positions 38-59 match the Nudix box motif; it reads GGVEPGERIEEALRREIREELG.

Belongs to the Nudix hydrolase family. NudI subfamily. As to quaternary structure, monomer. The cofactor is Mg(2+).

The enzyme catalyses a ribonucleoside 5'-triphosphate + H2O = a ribonucleoside 5'-phosphate + diphosphate + H(+). It catalyses the reaction a 2'-deoxyribonucleoside 5'-triphosphate + H2O = a 2'-deoxyribonucleoside 5'-phosphate + diphosphate + H(+). It carries out the reaction dUTP + H2O = dUMP + diphosphate + H(+). The catalysed reaction is dTTP + H2O = dTMP + diphosphate + H(+). The enzyme catalyses dCTP + H2O = dCMP + diphosphate + H(+). Functionally, catalyzes the hydrolysis of nucleoside triphosphates, with a preference for pyrimidine deoxynucleoside triphosphates (dUTP, dTTP and dCTP). The sequence is that of Nucleoside triphosphatase NudI from Escherichia coli O6:K15:H31 (strain 536 / UPEC).